The sequence spans 459 residues: GTPase Der (459 aa).

2 EngA-type G domains span residues 3 to 169 (PLVA…PPKE) and 183 to 358 (IRLA…DQFR). GTP is bound by residues 9-16 (GRPNVGKS), 56-60 (DTGGF), 119-122 (NKLD), 189-196 (GRPNVGKS), 236-240 (DTAGI), and 301-304 (NKWD). One can recognise a KH-like domain in the interval 359–442 (FRAPTPQLNR…PIRLIFKGRP (84 aa)).

This sequence belongs to the TRAFAC class TrmE-Era-EngA-EngB-Septin-like GTPase superfamily. EngA (Der) GTPase family. In terms of assembly, associates with the 50S ribosomal subunit.

Functionally, GTPase that plays an essential role in the late steps of ribosome biogenesis. In Myxococcus xanthus (strain DK1622), this protein is GTPase Der.